A 335-amino-acid polypeptide reads, in one-letter code: V-set and immunoglobulin domain-containing protein 1 (335 aa).

Residues 1 to 21 form the signal peptide; it reads MFPTMLKIFPILATLAGHVHG. Residues 22-136 enclose the Ig-like V-type domain; the sequence is VVVTVPEKTV…SQKSVIVNVL (115 aa). Topologically, residues 22 to 233 are extracellular; that stretch reads VVVTVPEKTV…DLTSMHSDGN (212 aa). 2 cysteine pairs are disulfide-bonded: Cys43–Cys115 and Cys160–Cys210. Residues 139 to 226 enclose the Ig-like C2-type domain; that stretch reads PSKPFCKIEG…GNSTCELDLT (88 aa). A helical transmembrane segment spans residues 234–254; the sequence is IVAGALIGAILAAVIICAIVW. The Cytoplasmic portion of the chain corresponds to 255–335; that stretch reads VLTKKAKKKK…QKEETAGSSF (81 aa). Residues 266 to 335 form a disordered region; it reads SSNEMQVMAQ…QKEETAGSSF (70 aa). Over residues 268–306 the composition is skewed to polar residues; sequence NEMQVMAQKQSNAEYAQVPNEENTPATAVLPSNATNEQP. Residues 319 to 335 are compositionally biased toward basic and acidic residues; that stretch reads NDEKHEVQKEETAGSSF.

In terms of tissue distribution, expressed in thymocytes.

The protein localises to the membrane. The sequence is that of V-set and immunoglobulin domain-containing protein 1 (VSIG1) from Gallus gallus (Chicken).